Here is a 366-residue protein sequence, read N- to C-terminus: Phenylalanine--tRNA ligase alpha subunit (366 aa).

Glutamate 264 is a Mg(2+) binding site.

It belongs to the class-II aminoacyl-tRNA synthetase family. Phe-tRNA synthetase alpha subunit type 1 subfamily. In terms of assembly, tetramer of two alpha and two beta subunits. Mg(2+) serves as cofactor.

The protein resides in the cytoplasm. The enzyme catalyses tRNA(Phe) + L-phenylalanine + ATP = L-phenylalanyl-tRNA(Phe) + AMP + diphosphate + H(+). The polypeptide is Phenylalanine--tRNA ligase alpha subunit (Zymomonas mobilis subsp. mobilis (strain ATCC 31821 / ZM4 / CP4)).